A 538-amino-acid chain; its full sequence is Pyruvate kinase (538 aa).

The residue at position 45 (serine 45) is a Phosphoserine. Position 72 (arginine 72) interacts with substrate. Residues asparagine 74, serine 76, aspartate 107, and threonine 108 each contribute to the K(+) site. 74 to 77 (NFSH) lines the ATP pocket. ATP contacts are provided by arginine 114 and lysine 200. Glutamate 265 contributes to the Mg(2+) binding site. Glycine 288, aspartate 289, and threonine 321 together coordinate substrate. Residue aspartate 289 coordinates Mg(2+).

This sequence belongs to the pyruvate kinase family. As to quaternary structure, homotetramer. The cofactor is Mg(2+). It depends on K(+) as a cofactor.

It catalyses the reaction pyruvate + ATP = phosphoenolpyruvate + ADP + H(+). It functions in the pathway carbohydrate degradation; glycolysis; pyruvate from D-glyceraldehyde 3-phosphate: step 5/5. The protein is Pyruvate kinase (pki1) of Hypocrea jecorina (Trichoderma reesei).